We begin with the raw amino-acid sequence, 227 residues long: Broad specificity amino-acid racemase RacX (227 aa).

Residue 51–53 (DRP) coordinates substrate. The active-site Proton donor/acceptor is C82. Residues 83 to 85 (NTA) and K161 each bind substrate. C191 serves as the catalytic Proton donor/acceptor.

This sequence belongs to the aspartate/glutamate racemases family. Homodimer.

The catalysed reaction is an L-alpha-amino acid = a D-alpha-amino acid. It catalyses the reaction (2S,6S)-2,6-diaminopimelate = meso-2,6-diaminopimelate. It carries out the reaction L-lysine = D-lysine. The enzyme catalyses L-arginine = D-arginine. The catalysed reaction is L-ornithine = D-ornithine. It catalyses the reaction L-histidine = D-histidine. It carries out the reaction L-alanine = D-alanine. The enzyme catalyses L-tyrosine = D-tyrosine. The catalysed reaction is L-phenylalanine = D-phenylalanine. It catalyses the reaction L-serine = D-serine. It carries out the reaction L-glutamine = D-glutamine. The enzyme catalyses L-methionine = D-methionine. The catalysed reaction is L-asparagine = D-asparagine. It catalyses the reaction L-homoserine = D-homoserine. In terms of biological role, amino-acid racemase able to utilize a broad range of substrates. Preferentially catalyzes the epimerization of LL-diaminopimelate, as well as the racemization of D-lysine, L-arginine, L-ornithine, L-lysine and D-arginine. Has lower activity against D-ornithine, L-histidine, L-alanine, L-tyrosine, L-phenylalanine, L-serine, L-glutamine, L-methionine, L-asparagine and L-homoserine. Has weak activity against L-norleucine, L-aminobutyric acid and L-norvaline. Has no activity toward nine L-amino acids (Thr, Glu, Asp, Val, Leu, Ile, Trp, Cit and Aad). D-amino acids might be used as components of peptidoglycan and/or be involved in peptidoglycan metabolism and remodeling. This is Broad specificity amino-acid racemase RacX (racX) from Bacillus subtilis (strain 168).